The chain runs to 118 residues: MDISGHPKTRTRTIFDEVDEPVWFCCVLPIWVGEEMASGWGITGNKGRCYDFWMDFSECMSHCREPKDCTLLREDYLECLHHSKEFQRRNRIYKEEQRKLRAASRKGEEAGDGTHNHH.

One can recognise a CHCH domain in the interval 46–87 (KGRCYDFWMDFSECMSHCREPKDCTLLREDYLECLHHSKEFQ). 2 short sequence motifs (cx9C motif) span residues 49-59 (CYDFWMDFSEC) and 69-79 (CTLLREDYLEC). Disulfide bonds link cysteine 49–cysteine 79 and cysteine 59–cysteine 69. The interval 98–118 (RKLRAASRKGEEAGDGTHNHH) is disordered.

The protein belongs to the complex I NDUFS5 subunit family. In terms of assembly, complex I is composed of at least 49 different subunits. This is a component of the iron-sulfur (IP) fragment of the enzyme.

It is found in the mitochondrion. Its subcellular location is the mitochondrion inner membrane. The protein localises to the mitochondrion intermembrane space. Its function is as follows. Accessory subunit of the mitochondrial membrane respiratory chain NADH dehydrogenase (Complex I), that is believed not to be involved in catalysis. Complex I functions in the transfer of electrons from NADH to the respiratory chain. The immediate electron acceptor for the enzyme is believed to be ubiquinone. This Arabidopsis thaliana (Mouse-ear cress) protein is NADH dehydrogenase [ubiquinone] iron-sulfur protein 5-A.